Here is a 133-residue protein sequence, read N- to C-terminus: Lymphocyte antigen 6 complex locus protein G6d (133 aa).

The N-terminal stretch at 1–19 (MKPQFVGILLSSLLGAALG) is a signal peptide. Residues 22 to 116 (MRCYNCGGSP…ASHVAPAGIL (95 aa)) enclose the UPAR/Ly6 domain. A disulfide bridge links cysteine 27 with cysteine 35. O-linked (GalNAc...) threonine glycosylation is found at threonine 40 and threonine 41. Intrachain disulfides connect cysteine 42/cysteine 71 and cysteine 77/cysteine 96. The GPI-anchor amidated serine moiety is linked to residue serine 104. Residues 105 to 133 (AVASHVAPAGILAAAATALTCLLPGLWSG) constitute a propeptide, removed in mature form.

As to quaternary structure, homodimer. Post-translationally, O-glycosylated. In terms of tissue distribution, expressed in the adult lung, and in fetal liver, lung, kidney, brain and spleen.

Its subcellular location is the cell membrane. The protein localises to the cell projection. The protein resides in the filopodium. The polypeptide is Lymphocyte antigen 6 complex locus protein G6d (LY6G6D) (Homo sapiens (Human)).